The sequence spans 271 residues: Thiazole synthase (271 aa).

Residue K104 is the Schiff-base intermediate with DXP of the active site. Residues G165, 192 to 193 (AG), and 214 to 215 (NT) contribute to the 1-deoxy-D-xylulose 5-phosphate site.

This sequence belongs to the ThiG family. In terms of assembly, homotetramer. Forms heterodimers with either ThiH or ThiS.

The protein resides in the cytoplasm. The enzyme catalyses [ThiS sulfur-carrier protein]-C-terminal-Gly-aminoethanethioate + 2-iminoacetate + 1-deoxy-D-xylulose 5-phosphate = [ThiS sulfur-carrier protein]-C-terminal Gly-Gly + 2-[(2R,5Z)-2-carboxy-4-methylthiazol-5(2H)-ylidene]ethyl phosphate + 2 H2O + H(+). It functions in the pathway cofactor biosynthesis; thiamine diphosphate biosynthesis. Its function is as follows. Catalyzes the rearrangement of 1-deoxy-D-xylulose 5-phosphate (DXP) to produce the thiazole phosphate moiety of thiamine. Sulfur is provided by the thiocarboxylate moiety of the carrier protein ThiS. In vitro, sulfur can be provided by H(2)S. The sequence is that of Thiazole synthase from Burkholderia mallei (strain ATCC 23344).